A 230-amino-acid polypeptide reads, in one-letter code: uncharacterized protein (230 aa).

A helical transmembrane segment spans residues 7–23; that stretch reads LFTASILSLGYLVFICG. Positions 27 to 230 are disordered; it reads KPKPTASTES…VKTEGTLKKN (204 aa). Positions 50 to 59 are enriched in low complexity; sequence AVPQKPAAPA. The span at 60 to 83 shows a compositional bias: basic and acidic residues; sequence AEEKAPVDPKDPKSKDVDEAKKPD. The span at 101–112 shows a compositional bias: basic residues; sequence KKSKKSEKSKKK. Over residues 113–173 the composition is skewed to basic and acidic residues; sequence KTEEKVMSED…KEKSKDETVP (61 aa). Residues 199 to 210 show a composition bias toward acidic residues; sequence ETDEFPTIDEDA. Positions 211 to 230 are enriched in basic and acidic residues; the sequence is EKTKKTEKKDVKTEGTLKKN.

It is found in the membrane. This is an uncharacterized protein from Caenorhabditis elegans.